The following is an 855-amino-acid chain: uncharacterized protein (855 aa).

The next 10 membrane-spanning stretches (helical) occupy residues 24–44 (PFQY…IVAI), 256–276 (AFTV…IFLI), 318–338 (IGTG…IGLV), 361–381 (LLKG…PPAI), 404–424 (LMPW…LMLW), 430–450 (LVVA…IAPP), 487–507 (IAIA…ISVG), 725–745 (ITIA…LSAL), 780–800 (MGGM…WILV), and 821–841 (FLRA…YPAW).

This sequence belongs to the ABC-4 integral membrane protein family. As to quaternary structure, the complex is probably composed of two ATP-binding proteins (Rv0986) and two transmembrane proteins (Rv0987).

The protein localises to the cell membrane. Probably part of an ABC transporter complex involved in host cell binding either through secretion of an adherence factor or through maintaining the architecture and integrity of the mycobacterial cell envelope. Could be required for host endothelial-cell invasion and/or intracellular survival. This is an uncharacterized protein from Mycobacterium tuberculosis (strain ATCC 25618 / H37Rv).